Here is a 62-residue protein sequence, read N- to C-terminus: Small ribosomal subunit protein eS30z/eS30y/eS30x (62 aa).

The disordered stretch occupies residues 1-38 (MGKVHGSLARAGKVRGQTPKVAKQDKKKKPRGRAHKRL). The span at 25–38 (DKKKKPRGRAHKRL) shows a compositional bias: basic residues.

The protein belongs to the eukaryotic ribosomal protein eS30 family.

The protein is Small ribosomal subunit protein eS30z/eS30y/eS30x (RPS30A) of Arabidopsis thaliana (Mouse-ear cress).